We begin with the raw amino-acid sequence, 95 residues long: MLHTLHRSPWLTDFAALLRLLSEGDELLLLQDGVTAAVDGNRYLESLRNAPIKVYALNEDLIARGLTGQILNDIIPIDYTDFVRLTVKHSSQMAW.

This sequence belongs to the DsrH/TusB family. In terms of assembly, heterohexamer, formed by a dimer of trimers. The hexameric TusBCD complex contains 2 copies each of TusB, TusC and TusD. The TusBCD complex interacts with TusE.

The protein resides in the cytoplasm. Functionally, part of a sulfur-relay system required for 2-thiolation of 5-methylaminomethyl-2-thiouridine (mnm(5)s(2)U) at tRNA wobble positions. This chain is Protein TusB, found in Shigella flexneri.